A 259-amino-acid chain; its full sequence is Ribosomal RNA small subunit methyltransferase J (259 aa).

S-adenosyl-L-methionine-binding positions include 107–108, 123–124, 159–160, and D177; these read RD, ER, and SS.

This sequence belongs to the methyltransferase superfamily. RsmJ family.

The protein localises to the cytoplasm. The catalysed reaction is guanosine(1516) in 16S rRNA + S-adenosyl-L-methionine = N(2)-methylguanosine(1516) in 16S rRNA + S-adenosyl-L-homocysteine + H(+). Functionally, specifically methylates the guanosine in position 1516 of 16S rRNA. The polypeptide is Ribosomal RNA small subunit methyltransferase J (Shewanella loihica (strain ATCC BAA-1088 / PV-4)).